The chain runs to 324 residues: Dehydrogenase/reductase SDR family member 7C-A (324 aa).

An N-terminal signal peptide occupies residues 1-17; the sequence is MAVPSVMVLPLLIVVFA. 41 to 65 contributes to the NAD(+) binding site; the sequence is VITDAVSGMGSECARLFHAGGARLV. S178 provides a ligand contact to substrate. The active-site Proton acceptor is the Y191.

Belongs to the short-chain dehydrogenases/reductases (SDR) family.

The protein resides in the secreted. Functionally, putative oxidoreductase. This is Dehydrogenase/reductase SDR family member 7C-A (dhrs7ca) from Danio rerio (Zebrafish).